Consider the following 460-residue polypeptide: Phosphomethylpyrimidine synthase (460 aa).

Substrate is bound by residues Asn80, Met109, Tyr139, His175, 195–197 (SRG), 236–239 (DSLR), and Glu275. His279 serves as a coordination point for Zn(2+). Tyr302 provides a ligand contact to substrate. Residue His343 coordinates Zn(2+). [4Fe-4S] cluster is bound by residues Cys423, Cys426, and Cys431.

This sequence belongs to the ThiC family. [4Fe-4S] cluster serves as cofactor.

The enzyme catalyses 5-amino-1-(5-phospho-beta-D-ribosyl)imidazole + S-adenosyl-L-methionine = 4-amino-2-methyl-5-(phosphooxymethyl)pyrimidine + CO + 5'-deoxyadenosine + formate + L-methionine + 3 H(+). It participates in cofactor biosynthesis; thiamine diphosphate biosynthesis. Its function is as follows. Catalyzes the synthesis of the hydroxymethylpyrimidine phosphate (HMP-P) moiety of thiamine from aminoimidazole ribotide (AIR) in a radical S-adenosyl-L-methionine (SAM)-dependent reaction. The protein is Phosphomethylpyrimidine synthase of Microcystis aeruginosa (strain NIES-843 / IAM M-2473).